We begin with the raw amino-acid sequence, 906 residues long: Protein translocase subunit SecA (906 aa).

ATP-binding positions include Q86, 104–108, and D499; that span reads GEGKT. The disordered stretch occupies residues 863 to 887; it reads PVVSRIDPKDRNPDDPTSWGRVSRN. Zn(2+) contacts are provided by C890, C892, C901, and H902.

The protein belongs to the SecA family. Monomer and homodimer. Part of the essential Sec protein translocation apparatus which comprises SecA, SecYEG and auxiliary proteins SecDF-YajC and YidC. It depends on Zn(2+) as a cofactor.

It is found in the cell inner membrane. Its subcellular location is the cytoplasm. It catalyses the reaction ATP + H2O + cellular proteinSide 1 = ADP + phosphate + cellular proteinSide 2.. In terms of biological role, part of the Sec protein translocase complex. Interacts with the SecYEG preprotein conducting channel. Has a central role in coupling the hydrolysis of ATP to the transfer of proteins into and across the cell membrane, serving both as a receptor for the preprotein-SecB complex and as an ATP-driven molecular motor driving the stepwise translocation of polypeptide chains across the membrane. The chain is Protein translocase subunit SecA from Rickettsia rickettsii (strain Iowa).